The primary structure comprises 179 residues: Bifunctional protein PyrR (179 aa).

A PRPP-binding motif is present at residues 97–109 (IILTDDVLYTGRT).

The protein belongs to the purine/pyrimidine phosphoribosyltransferase family. PyrR subfamily.

It carries out the reaction UMP + diphosphate = 5-phospho-alpha-D-ribose 1-diphosphate + uracil. In terms of biological role, regulates the transcription of the pyrimidine nucleotide (pyr) operon in response to exogenous pyrimidines. Functionally, also displays a weak uracil phosphoribosyltransferase activity which is not physiologically significant. The chain is Bifunctional protein PyrR from Elusimicrobium minutum (strain Pei191).